A 346-amino-acid polypeptide reads, in one-letter code: DNA-directed RNA polymerase subunit alpha (346 aa).

The interval 1 to 233 (MLRDEVAVSA…DLFIPFLHAE (233 aa)) is alpha N-terminal domain (alpha-NTD). The alpha C-terminal domain (alpha-CTD) stretch occupies residues 268–346 (IELKCIFIDQ…NKFLIGNPSE (79 aa)).

It belongs to the RNA polymerase alpha chain family. In plastids the minimal PEP RNA polymerase catalytic core is composed of four subunits: alpha, beta, beta', and beta''. When a (nuclear-encoded) sigma factor is associated with the core the holoenzyme is formed, which can initiate transcription.

It localises to the plastid. Its subcellular location is the chloroplast. It carries out the reaction RNA(n) + a ribonucleoside 5'-triphosphate = RNA(n+1) + diphosphate. Functionally, DNA-dependent RNA polymerase catalyzes the transcription of DNA into RNA using the four ribonucleoside triphosphates as substrates. This Ranunculus macranthus (Large buttercup) protein is DNA-directed RNA polymerase subunit alpha.